Reading from the N-terminus, the 86-residue chain is Serine protease inhibitor Kazal-type 9 (86 aa).

An N-terminal signal peptide occupies residues 1–19 (MRATAIVLLLALTLATMFS). Residues 26–86 (TKQMVDCSHY…TLKFVHFGKC (61 aa)) form the Kazal-like domain. Disulfide bonds link Cys32–Cys68, Cys46–Cys65, and Cys54–Cys86.

Dimer. Interacts with KLK5 and KLK8. In terms of tissue distribution, skin. Highly expressed at sites of hyperkeratosis. Also detected in thymus, tonsils, testis, pancreas, liver, placenta and brain. Expressed at stratum granulosum and stratum corneum at palmar and plantar sites (at protein level).

It is found in the secreted. Functionally, serine protease inhibitor which specifically inhibits KLK5. May contribute to the regulation of the desquamation process in skin by inhibiting KLK5. The protein is Serine protease inhibitor Kazal-type 9 (SPINK9) of Homo sapiens (Human).